Consider the following 516-residue polypeptide: ADP-ribosylation factor GTPase-activating protein 3 (516 aa).

The region spanning 10–126 (LTIFKRLRSV…IKSLASQATR (117 aa)) is the Arf-GAP domain. The segment at 25 to 48 (CFDCGAKNPSWASITYGVFLCIDC) adopts a C4-type zinc-finger fold. The disordered stretch occupies residues 170 to 199 (AEPSSLTSRPVETTLENNEGGQEQGPSVEG). A compositionally biased stretch (polar residues) spans 173 to 194 (SSLTSRPVETTLENNEGGQEQG). Phosphoserine is present on Ser-231. Positions 243–264 (NEIEKQAQAADKMKEQEDLAKA) form a coiled coil. Ser-270, Ser-274, Ser-331, and Ser-370 each carry phosphoserine. The interval 392-414 (KTTGYSDRPTARRKPDYEPVENT) is disordered. Phosphoserine is present on residues Ser-428, Ser-451, Ser-453, Ser-455, Ser-457, and Ser-458.

The protein resides in the cytoplasm. It is found in the golgi apparatus membrane. With respect to regulation, GAP activity stimulated by phosphatidylinositol 4,5-bisphosphate (PIP2). Functionally, GTPase-activating protein (GAP) for ADP ribosylation factor 1 (ARF1). Hydrolysis of ARF1-bound GTP may lead to dissociation of coatomer from Golgi-derived membranes to allow fusion with target membranes. The protein is ADP-ribosylation factor GTPase-activating protein 3 of Macaca fascicularis (Crab-eating macaque).